Consider the following 159-residue polypeptide: 3-hydroxyacyl-[acyl-carrier-protein] dehydratase FabZ (159 aa).

H58 is an active-site residue.

The protein belongs to the thioester dehydratase family. FabZ subfamily.

The protein localises to the cytoplasm. It catalyses the reaction a (3R)-hydroxyacyl-[ACP] = a (2E)-enoyl-[ACP] + H2O. Involved in unsaturated fatty acids biosynthesis. Catalyzes the dehydration of short chain beta-hydroxyacyl-ACPs and long chain saturated and unsaturated beta-hydroxyacyl-ACPs. The polypeptide is 3-hydroxyacyl-[acyl-carrier-protein] dehydratase FabZ (Helicobacter pylori (strain J99 / ATCC 700824) (Campylobacter pylori J99)).